The following is a 214-amino-acid chain: Adenylate kinase (214 aa).

Residue Gly10–Thr15 coordinates ATP. Positions Ser30–Val59 are NMP. AMP contacts are provided by residues Thr31, Arg36, Glu57–Val59, Gly85–Arg88, and Gln92. Positions Gly126–Asp163 are LID. ATP is bound at residue Arg127. The Zn(2+) site is built by Cys130 and Cys133. Residue Thr136–Tyr137 participates in ATP binding. Zn(2+) is bound by residues Cys150 and Cys153. Residues Arg160 and Arg171 each coordinate AMP. ATP is bound at residue Lys199.

This sequence belongs to the adenylate kinase family. Monomer.

The protein resides in the cytoplasm. It carries out the reaction AMP + ATP = 2 ADP. It functions in the pathway purine metabolism; AMP biosynthesis via salvage pathway; AMP from ADP: step 1/1. Functionally, catalyzes the reversible transfer of the terminal phosphate group between ATP and AMP. Plays an important role in cellular energy homeostasis and in adenine nucleotide metabolism. The chain is Adenylate kinase from Carboxydothermus hydrogenoformans (strain ATCC BAA-161 / DSM 6008 / Z-2901).